The following is a 250-amino-acid chain: NAD-dependent protein deacylase 1 (250 aa).

The 250-residue stretch at 1-250 folds into the Deacetylase sirtuin-type domain; it reads MRAVVELLAG…PELLRRAFPG (250 aa). Residue 19–39 participates in NAD(+) binding; it reads GAGVSAESGIPTFRDALGGLW. Substrate is bound by residues Tyr64 and Arg67. 98 to 101 provides a ligand contact to NAD(+); it reads QNVD. His116 serves as the catalytic Proton acceptor. Zn(2+)-binding residues include Cys124, Cys127, Cys152, and Cys155. NAD(+) contacts are provided by residues 192–194, 218–220, and Ala236; these read GTS and NPQ.

It belongs to the sirtuin family. Class III subfamily. Zn(2+) serves as cofactor.

Its subcellular location is the cytoplasm. The catalysed reaction is N(6)-acetyl-L-lysyl-[protein] + NAD(+) + H2O = 2''-O-acetyl-ADP-D-ribose + nicotinamide + L-lysyl-[protein]. It carries out the reaction N(6)-succinyl-L-lysyl-[protein] + NAD(+) + H2O = 2''-O-succinyl-ADP-D-ribose + nicotinamide + L-lysyl-[protein]. NAD-dependent lysine deacetylase and desuccinylase that specifically removes acetyl and succinyl groups on target proteins. Modulates the activities of several proteins which are inactive in their acylated form. The chain is NAD-dependent protein deacylase 1 from Pseudomonas aeruginosa (strain ATCC 15692 / DSM 22644 / CIP 104116 / JCM 14847 / LMG 12228 / 1C / PRS 101 / PAO1).